Consider the following 173-residue polypeptide: MCGMRILGLDPGVAILGYGVLDFFDSAPPVVCDYGIVQTSAKTAFEARLAAIYEDINSLFSAHKPDLVAIEKLFFYKMGNTISVAQARGVVLLCAAQHGVPYVEFSPPQVKLALTGDGRADKRAIQEAVQRELGLITMPKPDDAADALAIALTGWFHHLPPAAREAVPAYSVG.

Catalysis depends on residues aspartate 10, glutamate 71, and aspartate 143. 3 residues coordinate Mg(2+): aspartate 10, glutamate 71, and aspartate 143.

The protein belongs to the RuvC family. Homodimer which binds Holliday junction (HJ) DNA. The HJ becomes 2-fold symmetrical on binding to RuvC with unstacked arms; it has a different conformation from HJ DNA in complex with RuvA. In the full resolvosome a probable DNA-RuvA(4)-RuvB(12)-RuvC(2) complex forms which resolves the HJ. It depends on Mg(2+) as a cofactor.

Its subcellular location is the cytoplasm. The enzyme catalyses Endonucleolytic cleavage at a junction such as a reciprocal single-stranded crossover between two homologous DNA duplexes (Holliday junction).. In terms of biological role, the RuvA-RuvB-RuvC complex processes Holliday junction (HJ) DNA during genetic recombination and DNA repair. Endonuclease that resolves HJ intermediates. Cleaves cruciform DNA by making single-stranded nicks across the HJ at symmetrical positions within the homologous arms, yielding a 5'-phosphate and a 3'-hydroxyl group; requires a central core of homology in the junction. The consensus cleavage sequence is 5'-(A/T)TT(C/G)-3'. Cleavage occurs on the 3'-side of the TT dinucleotide at the point of strand exchange. HJ branch migration catalyzed by RuvA-RuvB allows RuvC to scan DNA until it finds its consensus sequence, where it cleaves and resolves the cruciform DNA. The polypeptide is Crossover junction endodeoxyribonuclease RuvC (Gloeobacter violaceus (strain ATCC 29082 / PCC 7421)).